A 116-amino-acid polypeptide reads, in one-letter code: Tyrosine-protein phosphatase 10 (116 aa).

The Tyrosine-protein phosphatase domain occupies 1-116 (WRMVWEQNVS…SPTGYGPIVV (116 aa)). D86 provides a ligand contact to substrate.

It belongs to the protein-tyrosine phosphatase family.

It catalyses the reaction O-phospho-L-tyrosyl-[protein] + H2O = L-tyrosyl-[protein] + phosphate. This Styela plicata (Wrinkled sea squirt) protein is Tyrosine-protein phosphatase 10 (STY-10).